The sequence spans 473 residues: Photosystem II CP43 reaction center protein (473 aa).

The propeptide occupies 1-14; sequence MKTLYSLRRFYHVE. Threonine 15 bears the N-acetylthreonine mark. Threonine 15 bears the Phosphothreonine mark. The next 5 helical transmembrane spans lie at 69-93, 134-155, 178-200, 255-275, and 291-312; these read LFEV…PHLA, LLGP…KDRN, KALY…RKIA, KPFA…LSYS, and WFNN…ASQA. Glutamate 367 serves as a coordination point for [CaMn4O5] cluster. The helical transmembrane segment at 447 to 471 threads the bilayer; the sequence is RARAAAAGFEKGIDRDFEPVLSMTP.

This sequence belongs to the PsbB/PsbC family. PsbC subfamily. In terms of assembly, PSII is composed of 1 copy each of membrane proteins PsbA, PsbB, PsbC, PsbD, PsbE, PsbF, PsbH, PsbI, PsbJ, PsbK, PsbL, PsbM, PsbT, PsbX, PsbY, PsbZ, Psb30/Ycf12, at least 3 peripheral proteins of the oxygen-evolving complex and a large number of cofactors. It forms dimeric complexes. The cofactor is Binds multiple chlorophylls and provides some of the ligands for the Ca-4Mn-5O cluster of the oxygen-evolving complex. It may also provide a ligand for a Cl- that is required for oxygen evolution. PSII binds additional chlorophylls, carotenoids and specific lipids..

Its subcellular location is the plastid membrane. One of the components of the core complex of photosystem II (PSII). It binds chlorophyll and helps catalyze the primary light-induced photochemical processes of PSII. PSII is a light-driven water:plastoquinone oxidoreductase, using light energy to abstract electrons from H(2)O, generating O(2) and a proton gradient subsequently used for ATP formation. The protein is Photosystem II CP43 reaction center protein of Cuscuta exaltata (Tall dodder).